Consider the following 328-residue polypeptide: MNQVDYLRISLIDRCNFRCQYCMPEGSELDYILKQQLLTDEELLTLVQEVFIPVGFRQFRLTGGEPLLRPRVVDLVGAIASLPQTQDLSMTTNGFLLAPIAQNLYDAGLRRINISLDSLDPHIFDQIIGSHGRSRWQQVWDGIQAAHRVGFDPLKLNVVVIPGVNDHEILDLAALTIDKQWHVRFIEFMPIGNGELFGDRGWVSSSQLRQQIRDRWGLTDAQVRGSGPADVFQIPGAKGTLGFISQMSECFCDRCNRMRLSADGWLRPCLLNETGQLDLKTSLRSGVSIHQLREQVRHLLAIKPEINYKGRDSGTTGAYSRTMSQIGG.

The 229-residue stretch at 1 to 229 (MNQVDYLRIS…DAQVRGSGPA (229 aa)) folds into the Radical SAM core domain. Position 8 (R8) interacts with GTP. [4Fe-4S] cluster is bound by residues C15 and C19. Y21 contributes to the S-adenosyl-L-methionine binding site. C22 is a binding site for [4Fe-4S] cluster. R60 is a GTP binding site. Position 64 (G64) interacts with S-adenosyl-L-methionine. Position 91 (T91) interacts with GTP. S115 contacts S-adenosyl-L-methionine. K155 contributes to the GTP binding site. Residue M189 participates in S-adenosyl-L-methionine binding. [4Fe-4S] cluster is bound by residues C252 and C255. 257–259 (RMR) serves as a coordination point for GTP. C269 is a [4Fe-4S] cluster binding site.

It belongs to the radical SAM superfamily. MoaA family. Monomer and homodimer. [4Fe-4S] cluster serves as cofactor.

The enzyme catalyses GTP + AH2 + S-adenosyl-L-methionine = (8S)-3',8-cyclo-7,8-dihydroguanosine 5'-triphosphate + 5'-deoxyadenosine + L-methionine + A + H(+). It functions in the pathway cofactor biosynthesis; molybdopterin biosynthesis. Its function is as follows. Catalyzes the cyclization of GTP to (8S)-3',8-cyclo-7,8-dihydroguanosine 5'-triphosphate. This Trichormus variabilis (strain ATCC 29413 / PCC 7937) (Anabaena variabilis) protein is GTP 3',8-cyclase.